The sequence spans 330 residues: MSTLFQALQAEKNADDVSVHVKTISTEDLPKDGVLIKVAYSGINYKDGLAGKAGGNIVREYPLILGIDAAGTVVSSNDPRFAEGDEVIATSYELGVSRDGGLSEYASVPGDWLVPLPQNLSLKEAMVYGTAGFTAALSVHRLEQNGLSPEKGSVLVTGATGGVGGIAVSMLNKRGYDVVASTGNREAADYLKQLGASEVISREDVYDGTLKALSKQQWQGAVDPVGGKQLASLLSKIQYGGSVAVSGLTGGGEVPATVYPFILRGVSLLGIDSVYCPMDVRAAVWERMSSDLKPDQLLTIVDREVSLEETPGALKDILQNRIQGRVIVKL.

Residues tyrosine 45, 160-163 (TGGV), 182-184 (TGN), arginine 202, leucine 248, isoleucine 262, serine 273, and asparagine 320 contribute to the NADP(+) site.

The protein belongs to the zinc-containing alcohol dehydrogenase family. Quinone oxidoreductase subfamily. Homodimer, or homotetramer.

The protein localises to the cytoplasm. This chain is Putative quinone oxidoreductase YhfP (yhfP), found in Bacillus subtilis (strain 168).